The primary structure comprises 134 residues: Profilin-2 (134 aa).

Cysteines 13 and 118 form a disulfide. The short motif at 84-100 (AVIRGKKGSGGITIKKT) is the Involved in PIP2 interaction element. Threonine 114 carries the post-translational modification Phosphothreonine.

This sequence belongs to the profilin family. As to quaternary structure, occurs in many kinds of cells as a complex with monomeric actin in a 1:1 ratio. Post-translationally, phosphorylated by MAP kinases.

The protein localises to the cytoplasm. The protein resides in the cytoskeleton. Binds to actin and affects the structure of the cytoskeleton. At high concentrations, profilin prevents the polymerization of actin, whereas it enhances it at low concentrations. The protein is Profilin-2 of Olea europaea (Common olive).